A 325-amino-acid polypeptide reads, in one-letter code: Lipid droplet-associated hydrolase (325 aa).

Ser139 (nucleophile) is an active-site residue. Active-site charge relay system residues include Asp271 and His300.

This sequence belongs to the AB hydrolase superfamily. LDAH family.

It localises to the lipid droplet. The protein resides in the endoplasmic reticulum. It carries out the reaction a cholesterol ester + H2O = cholesterol + a fatty acid + H(+). In terms of biological role, probable serine lipid hydrolase associated with lipid droplets. Has low cholesterol esterase activity. Appears to lack triglyceride lipase activity. Involved in cholesterol and triglyceride homeostasis; stimulates cellular triglyceride accumulation and cellular cholesterol release. Acts antagonistically with PNPLA2/ATGL in regulation of cellular lipid stores. May regulate triglyceride accumulation indirectly through stimulation of PNPLA2/ATGL ubiquitination and proteasomal degradation. Promotes microtubule-dependent lipid droplet fusion. Highly expressed in macrophage-rich areas in atherosclerotic lesions, suggesting that it could promote cholesterol ester turnover in macrophages. The chain is Lipid droplet-associated hydrolase from Rattus norvegicus (Rat).